The chain runs to 138 residues: Holo-[acyl-carrier-protein] synthase (138 aa).

2 residues coordinate Mg(2+): aspartate 8 and glutamate 57.

Belongs to the P-Pant transferase superfamily. AcpS family. Mg(2+) is required as a cofactor.

Its subcellular location is the cytoplasm. The enzyme catalyses apo-[ACP] + CoA = holo-[ACP] + adenosine 3',5'-bisphosphate + H(+). In terms of biological role, transfers the 4'-phosphopantetheine moiety from coenzyme A to a Ser of acyl-carrier-protein. The protein is Holo-[acyl-carrier-protein] synthase of Phenylobacterium zucineum (strain HLK1).